Consider the following 211-residue polypeptide: Troponin I, cardiac muscle (211 aa).

Positions 1-25 (MADESSDAAGEPQPAPAPVRRRSSA) are disordered. Ala-2 carries the N-acetylalanine modification. Phosphoserine occurs at positions 5 and 6. Phosphoserine; by PKA and PKD/PRKD1 occurs at positions 23 and 24. Tyr-27 is modified (phosphotyrosine). Residue Thr-32 is modified to Phosphothreonine; by STK4/MST1. The interval 33–80 (EPHAKKKSKISASRKLQLKTLMLQIAKQEMEREAEERRGEKGRVLSTR) is involved in binding TNC. 2 positions are modified to phosphoserine; by PKC/PRKCE: Ser-43 and Ser-45. Thr-52 is subject to Phosphothreonine; by STK4/MST1. Ser-78 is modified (phosphoserine). Thr-79 bears the Phosphothreonine mark. Phosphothreonine; by STK4/MST1 occurs at positions 130 and 144. Residues 130 to 151 (TQKIYDLRGKFKRPTLRRVRIS) form an involved in binding TNC and actin region. Ser-151 bears the Phosphoserine; by PAK3 mark. 2 positions are modified to phosphoserine: Ser-167 and Ser-200.

This sequence belongs to the troponin I family. In terms of assembly, interacts with TRIM63. Binds to actin and tropomyosin. Interacts with STK4/MST1. In terms of processing, phosphorylated at Ser-23 and Ser-24 by PRKD1; phosphorylation reduces myofilament calcium sensitivity. Phosphorylated preferentially at Thr-32. Phosphorylation by STK4/MST1 alters its binding affinity to TNNC1 (cardiac Tn-C) and TNNT2 (cardiac Tn-T). Phosphorylated at Ser-43 and Ser-45 by PRKCE; phosphorylation increases myocardium contractile dysfunction.

In terms of biological role, troponin I is the inhibitory subunit of troponin, the thin filament regulatory complex which confers calcium-sensitivity to striated muscle actomyosin ATPase activity. The sequence is that of Troponin I, cardiac muscle (Tnni3) from Rattus norvegicus (Rat).